The primary structure comprises 312 residues: DNA-directed RNA polymerase subunit alpha (312 aa).

Residues 1–229 (MLQYQIDRIE…ELFQPLATVT (229 aa)) form an alpha N-terminal domain (alpha-NTD) region. Positions 246 to 312 (IPLEELNLSV…ISIPQSRTSA (67 aa)) are alpha C-terminal domain (alpha-CTD).

The protein belongs to the RNA polymerase alpha chain family. In cyanobacteria the RNAP catalytic core is composed of 2 alpha, 1 beta, 1 beta', 1 gamma and 1 omega subunit. When a sigma factor is associated with the core the holoenzyme is formed, which can initiate transcription.

It catalyses the reaction RNA(n) + a ribonucleoside 5'-triphosphate = RNA(n+1) + diphosphate. In terms of biological role, DNA-dependent RNA polymerase catalyzes the transcription of DNA into RNA using the four ribonucleoside triphosphates as substrates. The chain is DNA-directed RNA polymerase subunit alpha from Parasynechococcus marenigrum (strain WH8102).